A 523-amino-acid polypeptide reads, in one-letter code: UPF0329 protein ECU02_0050 (523 aa).

A disordered region spans residues 326–386 (EEKAKSKKRG…KTGKKSEGGR (61 aa)). The segment covering 330 to 339 (KSKKRGKRKS) has biased composition (basic residues). Basic and acidic residues predominate over residues 344 to 353 (EAKEEEKKES). Over residues 354–368 (ETEEVEAGEEVEMPS) the composition is skewed to acidic residues.

This sequence belongs to the UPF0329 family.

The polypeptide is UPF0329 protein ECU02_0050 (Encephalitozoon cuniculi (strain GB-M1) (Microsporidian parasite)).